The primary structure comprises 152 residues: 3-dehydroquinate dehydratase (152 aa).

Residue Tyr-22 is the Proton acceptor of the active site. Asn-73, His-79, and Asp-86 together coordinate substrate. Residue His-99 is the Proton donor of the active site. Substrate is bound by residues 100–101 and Arg-110; that span reads LS.

This sequence belongs to the type-II 3-dehydroquinase family. Homododecamer.

It catalyses the reaction 3-dehydroquinate = 3-dehydroshikimate + H2O. The protein operates within metabolic intermediate biosynthesis; chorismate biosynthesis; chorismate from D-erythrose 4-phosphate and phosphoenolpyruvate: step 3/7. Its function is as follows. Catalyzes a trans-dehydration via an enolate intermediate. The sequence is that of 3-dehydroquinate dehydratase from Gemmatimonas aurantiaca (strain DSM 14586 / JCM 11422 / NBRC 100505 / T-27).